The chain runs to 101 residues: uncharacterized protein (101 aa).

2 consecutive transmembrane segments (helical) span residues 3–23 (IIGS…AIIF) and 68–88 (VIVL…IIVI).

It localises to the cell membrane. This is an uncharacterized protein from Ureaplasma parvum serovar 3 (strain ATCC 700970).